A 382-amino-acid chain; its full sequence is D-galactonate dehydratase (382 aa).

Asp-183 provides a ligand contact to Mg(2+). His-185 serves as the catalytic Proton donor. The Mg(2+) site is built by Glu-209 and Glu-235. The active-site Proton acceptor is His-285.

It belongs to the mandelate racemase/muconate lactonizing enzyme family. GalD subfamily. Mg(2+) serves as cofactor.

The enzyme catalyses D-galactonate = 2-dehydro-3-deoxy-D-galactonate + H2O. It functions in the pathway carbohydrate acid metabolism; D-galactonate degradation; D-glyceraldehyde 3-phosphate and pyruvate from D-galactonate: step 1/3. Functionally, catalyzes the dehydration of D-galactonate to 2-keto-3-deoxy-D-galactonate. The polypeptide is D-galactonate dehydratase (Xanthomonas campestris pv. campestris (strain 8004)).